The following is a 68-amino-acid chain: Large ribosomal subunit protein uL29 (68 aa).

It belongs to the universal ribosomal protein uL29 family.

The protein is Large ribosomal subunit protein uL29 of Rhodopseudomonas palustris (strain BisA53).